The primary structure comprises 376 residues: UDP-4-amino-4,6-dideoxy-N-acetyl-beta-L-altrosamine transaminase (376 aa).

Substrate contacts are provided by residues tyrosine 4, 24 to 27 (EILT), alanine 54, and serine 176. The residue at position 181 (lysine 181) is an N6-(pyridoxal phosphate)lysine. Substrate is bound by residues asparagine 226 and 311–314 (QVHY).

The protein belongs to the DegT/DnrJ/EryC1 family.

The enzyme catalyses UDP-4-amino-4,6-dideoxy-N-acetyl-beta-L-altrosamine + 2-oxoglutarate = UDP-2-acetamido-2,6-dideoxy-beta-L-arabino-hex-4-ulose + L-glutamate. Functionally, catalyzes the second step in the biosynthesis of pseudaminic acid, a sialic-acid-like sugar that is used to modify flagellin. Uses UDP-2-acetamido-2,6-dideoxy-beta-L-arabino-4-hexulose as substrate producing UDP-4-amino-4,6-dideoxy-beta-L-AltNAc. The polypeptide is UDP-4-amino-4,6-dideoxy-N-acetyl-beta-L-altrosamine transaminase (pseC) (Campylobacter jejuni subsp. jejuni serotype O:2 (strain ATCC 700819 / NCTC 11168)).